The chain runs to 304 residues: Ribosomal RNA small subunit methyltransferase H (304 aa).

Residues 36–38 (CGH), Asp55, Phe81, Asp102, and Gln109 each bind S-adenosyl-L-methionine.

Belongs to the methyltransferase superfamily. RsmH family.

The protein localises to the cytoplasm. The enzyme catalyses cytidine(1402) in 16S rRNA + S-adenosyl-L-methionine = N(4)-methylcytidine(1402) in 16S rRNA + S-adenosyl-L-homocysteine + H(+). Its function is as follows. Specifically methylates the N4 position of cytidine in position 1402 (C1402) of 16S rRNA. The protein is Ribosomal RNA small subunit methyltransferase H of Onion yellows phytoplasma (strain OY-M).